A 259-amino-acid chain; its full sequence is Thiazole synthase (259 aa).

The Schiff-base intermediate with DXP role is filled by Lys99. 1-deoxy-D-xylulose 5-phosphate is bound by residues Gly161, Ala187–Gly188, and Asn209–Thr210.

The protein belongs to the ThiG family. In terms of assembly, homotetramer. Forms heterodimers with either ThiH or ThiS.

The protein resides in the cytoplasm. It carries out the reaction [ThiS sulfur-carrier protein]-C-terminal-Gly-aminoethanethioate + 2-iminoacetate + 1-deoxy-D-xylulose 5-phosphate = [ThiS sulfur-carrier protein]-C-terminal Gly-Gly + 2-[(2R,5Z)-2-carboxy-4-methylthiazol-5(2H)-ylidene]ethyl phosphate + 2 H2O + H(+). Its pathway is cofactor biosynthesis; thiamine diphosphate biosynthesis. Functionally, catalyzes the rearrangement of 1-deoxy-D-xylulose 5-phosphate (DXP) to produce the thiazole phosphate moiety of thiamine. Sulfur is provided by the thiocarboxylate moiety of the carrier protein ThiS. In vitro, sulfur can be provided by H(2)S. This is Thiazole synthase from Nitratiruptor sp. (strain SB155-2).